The following is a 37-amino-acid chain: Large ribosomal subunit protein bL36A (37 aa).

It belongs to the bacterial ribosomal protein bL36 family.

The sequence is that of Large ribosomal subunit protein bL36A from Arthrobacter sp. (strain FB24).